Here is a 229-residue protein sequence, read N- to C-terminus: PKHD-type hydroxylase Rpal_3968 (229 aa).

Residues 78-180 enclose the Fe2OG dioxygenase domain; the sequence is QIFPPLFNRY…RVASFFWLQS (103 aa). 3 residues coordinate Fe cation: histidine 98, aspartate 100, and histidine 161. 2-oxoglutarate is bound at residue arginine 171.

The cofactor is Fe(2+). It depends on L-ascorbate as a cofactor.

The chain is PKHD-type hydroxylase Rpal_3968 from Rhodopseudomonas palustris (strain TIE-1).